We begin with the raw amino-acid sequence, 226 residues long: N-(5'-phosphoribosyl)anthranilate isomerase (226 aa).

The protein belongs to the TrpF family.

The enzyme catalyses N-(5-phospho-beta-D-ribosyl)anthranilate = 1-(2-carboxyphenylamino)-1-deoxy-D-ribulose 5-phosphate. It functions in the pathway amino-acid biosynthesis; L-tryptophan biosynthesis; L-tryptophan from chorismate: step 3/5. The chain is N-(5'-phosphoribosyl)anthranilate isomerase (trpF) from Methanothermobacter marburgensis (strain ATCC BAA-927 / DSM 2133 / JCM 14651 / NBRC 100331 / OCM 82 / Marburg) (Methanobacterium thermoautotrophicum).